Reading from the N-terminus, the 162-residue chain is Caveolin-2 (162 aa).

The Cytoplasmic portion of the chain corresponds to 1–86; the sequence is MGLETEKADV…FEISKYVLYK (86 aa). The residue at position 19 (tyrosine 19) is a Phosphotyrosine; by SRC. A phosphoserine mark is found at serine 20 and serine 23. An intramembrane region (helical) is located at residues 87–107; it reads FLTVFLAIPLAFAAGVLFAVL. Residues 108-162 lie on the Cytoplasmic side of the membrane; the sequence is SCLHIWILMPFVKTCLMVLPSVQTIWRSVTDVVIAPLCASIGRSFSSVGLQLSHD.

This sequence belongs to the caveolin family. Monomer or homodimer. Interacts with CAV1; the interaction forms a stable heterooligomeric complex that is required for targeting to lipid rafts and for caveolae formation. Tyrosine phosphorylated forms do not form heterooligomers with the Tyr-19-phosphorylated form existing as a monomer or dimer. Interacts (tyrosine phosphorylated form) with the SH2 domain-containing proteins, RASA1, NCK1 and SRC. Interacts (tyrosine phosphorylated form) with INSR. Interacts (Tyr-19 phosphorylated form) with MAPK1 (phosphorylated form); the interaction, promoted by insulin, leads to nuclear location and MAPK1 activation. Interacts with STAT3; the interaction is increased on insulin-induced tyrosine phosphorylation leading to STAT activation. Phosphorylated on serine and tyrosine residues. CAV1 promotes phosphorylation on Ser-23 which then targets the complex to the plasma membrane, lipid rafts and caveolae. Phosphorylation on Tyr-19 is required for insulin-induced phosphorylation of MAPK1 and DNA binding of STAT3. Tyrosine phosphorylation is induced by both EGF and insulin.

It is found in the nucleus. It localises to the cytoplasm. Its subcellular location is the golgi apparatus membrane. The protein resides in the cell membrane. The protein localises to the membrane. It is found in the caveola. In terms of biological role, may act as a scaffolding protein within caveolar membranes. Interacts directly with G-protein alpha subunits and can functionally regulate their activity. Acts as an accessory protein in conjunction with CAV1 in targeting to lipid rafts and driving caveolae formation. Positive regulator of cellular mitogenesis of the MAPK signaling pathway. Required for the insulin-stimulated nuclear translocation and activation of MAPK1 and STAT3, and the subsequent regulation of cell cycle progression. The sequence is that of Caveolin-2 (CAV2) from Oryctolagus cuniculus (Rabbit).